Here is a 217-residue protein sequence, read N- to C-terminus: Redox-sensing transcriptional repressor Rex (217 aa).

A DNA-binding region (H-T-H motif) is located at residues 17-56 (RYLRYVEDLLNHDVLRISSSELSQRMGYTASQVRQDFNNF). An NAD(+)-binding site is contributed by 91-96 (GVGNLG).

This sequence belongs to the transcriptional regulatory Rex family. In terms of assembly, homodimer.

It is found in the cytoplasm. Its function is as follows. Modulates transcription in response to changes in cellular NADH/NAD(+) redox state. This is Redox-sensing transcriptional repressor Rex from Caldicellulosiruptor bescii (strain ATCC BAA-1888 / DSM 6725 / KCTC 15123 / Z-1320) (Anaerocellum thermophilum).